Reading from the N-terminus, the 154-residue chain is NADPH-dependent 7-cyano-7-deazaguanine reductase (154 aa).

The active-site Thioimide intermediate is the Cys52. The Proton donor role is filled by Asp59. Residues 74–76 (VES) and 93–94 (HE) contribute to the substrate site.

It belongs to the GTP cyclohydrolase I family. QueF type 1 subfamily.

The protein resides in the cytoplasm. The enzyme catalyses 7-aminomethyl-7-carbaguanine + 2 NADP(+) = 7-cyano-7-deazaguanine + 2 NADPH + 3 H(+). The protein operates within tRNA modification; tRNA-queuosine biosynthesis. In terms of biological role, catalyzes the NADPH-dependent reduction of 7-cyano-7-deazaguanine (preQ0) to 7-aminomethyl-7-deazaguanine (preQ1). In Ruegeria sp. (strain TM1040) (Silicibacter sp.), this protein is NADPH-dependent 7-cyano-7-deazaguanine reductase.